An 87-amino-acid polypeptide reads, in one-letter code: Putative regulatory protein BH2513 (87 aa).

It belongs to the RemA family.

The sequence is that of Putative regulatory protein BH2513 from Halalkalibacterium halodurans (strain ATCC BAA-125 / DSM 18197 / FERM 7344 / JCM 9153 / C-125) (Bacillus halodurans).